The primary structure comprises 129 residues: M-zodatoxin-Lt8b (129 aa).

A signal peptide spans 1–20; the sequence is MKYFVVALALVAAFACIAES. The propeptide occupies 21–60; that stretch reads KPAESEHELAEVEEENELADLEDAVWLEHLADLSDLEEAR. Residues 57–60 carry the Processing quadruplet motif motif; it reads EEAR.

In terms of processing, cleavage of the propeptide depends on the processing quadruplet motif (XXXR, with at least one of X being E). Expressed by the venom gland.

The protein localises to the secreted. Its function is as follows. Insecticidal, cytolytic and antimicrobial peptide. Forms voltage-dependent, ion-permeable channels in membranes. At high concentration causes cell membrane lysis. In Lachesana tarabaevi (Spider), this protein is M-zodatoxin-Lt8b (cit 1-2).